Consider the following 106-residue polypeptide: Urease subunit beta (106 aa).

The protein belongs to the urease beta subunit family. Heterotrimer of UreA (gamma), UreB (beta) and UreC (alpha) subunits. Three heterotrimers associate to form the active enzyme.

The protein resides in the cytoplasm. The enzyme catalyses urea + 2 H2O + H(+) = hydrogencarbonate + 2 NH4(+). It functions in the pathway nitrogen metabolism; urea degradation; CO(2) and NH(3) from urea (urease route): step 1/1. This is Urease subunit beta from Alkalilimnicola ehrlichii (strain ATCC BAA-1101 / DSM 17681 / MLHE-1).